The following is a 460-amino-acid chain: Putative 2,3-dihydroxypropane-1-sulfonate exporter (460 aa).

The Cytoplasmic portion of the chain corresponds to 1-18 (MSQTSSNPATLRLPFKEK). A helical transmembrane segment spans residues 19–39 (LAYGLGDLGSNILLDIGTLYL). Topologically, residues 40–46 (LKFYTDV) are periplasmic. Residues 47–67 (LGLPGTYGGIIFLIAKFFTAF) form a helical membrane-spanning segment. Residues 68-91 (TDMGTGIMLDSRRKIGPKGKFRPF) lie on the Cytoplasmic side of the membrane. A helical membrane pass occupies residues 92–112 (VLYAAFPVTLLAIANFVGTPF). Residues 113–122 (EVTGKTVVAT) are Periplasmic-facing. A helical membrane pass occupies residues 123 to 143 (MLFMLYGLVFSMMNCSYGAMV). Over 144–161 (PAITKNPDERASLAAWRQ) the chain is Cytoplasmic. A helical transmembrane segment spans residues 162 to 182 (GGATLGLLLCTVGFVPVMNLI). Residues 183–190 (EGNAQLSY) lie on the Periplasmic side of the membrane. A helical membrane pass occupies residues 191–211 (IFAATLFSLFGLLFMWLCYAG). The Cytoplasmic portion of the chain corresponds to 212-242 (VKERYVEVKPVDSAQKPGLLQSFRAIAGNRP). Residues 243–263 (LFILCIANLCTLGAFNVKLAI) form a helical membrane-spanning segment. The Periplasmic portion of the chain corresponds to 264–275 (QVYYTQYVLNDP). The helical transmembrane segment at 276–296 (ILLSWMGFFSMGCIFIGVFLM) threads the bilayer. Over 297 to 307 (PGAVRRFGKKK) the chain is Cytoplasmic. The chain crosses the membrane as a helical span at residues 308–328 (VYIGGLLIWVAGDLLNYFFGG). A topological domain (periplasmic) is located at residue Gly329. A helical transmembrane segment spans residues 330–350 (SVSFVAFSCLAFFGSAFVNSL). Residues 351–386 (NWALVSDTVEYGEWRTGVRSEGTVYTGFTFFRKVSQ) are Cytoplasmic-facing. A helical transmembrane segment spans residues 387-407 (ALAGFFPGWMLTQIGYIPNVV). Over 408–418 (QSAGTVEGLRQ) the chain is Periplasmic. Residues 419-439 (LIFIYPCVLAVITIIAMGCFY) traverse the membrane as a helical segment. The Cytoplasmic portion of the chain corresponds to 440-460 (NLNEKMYVRIVEEIEARKHTV).

Belongs to the sodium:galactoside symporter (TC 2.A.2) family.

It is found in the cell inner membrane. Its function is as follows. Could be involved in the export of 2,3-dihydroxypropane-1-sulfonate (DHPS). The polypeptide is Putative 2,3-dihydroxypropane-1-sulfonate exporter (yihP) (Salmonella typhimurium (strain LT2 / SGSC1412 / ATCC 700720)).